Here is a 78-residue protein sequence, read N- to C-terminus: MKQIFIGIIRFYQKFISPMTPPTCRFYPTCSHYGLEAFQKHGTFKGFWLTCKRILKCHPFHPGGFDPVPDKKDDKVNS.

The protein belongs to the UPF0161 family.

Its subcellular location is the cell membrane. In terms of biological role, could be involved in insertion of integral membrane proteins into the membrane. This is Putative membrane protein insertion efficiency factor from Bacillus mycoides (strain KBAB4) (Bacillus weihenstephanensis).